Here is a 593-residue protein sequence, read N- to C-terminus: Kelch-like protein 2 (593 aa).

The disordered stretch occupies residues 1-29 (MESPPLPPACTKQGHQKPLDSKDENPEKH). Positions 17 to 29 (KPLDSKDENPEKH) are enriched in basic and acidic residues. One can recognise a BTB domain in the interval 56-123 (CDVTIVAEDM…VYTAEIQVTE (68 aa)). Kelch repeat units lie at residues 308 to 353 (LMVV…YMAG), 354 to 400 (LVFA…VLNG), 402 to 447 (LYAV…VVGG), 449 to 496 (LYAV…VLNN), 497 to 543 (LLYA…AVNG), and 545 to 591 (LYVV…VIDK).

Component of the BCR(KLHL2) E3 ubiquitin ligase complex, at least composed of CUL3 and KLHL2 and RBX1. Binds actin. Interacts with KLHL12. Interacts (via N-terminus) with FYN (via SH3 domain). As to expression, detected in brain neurons, oligodendrocytes and astrocytes (at protein level).

The protein localises to the cytoplasm. It localises to the cytoskeleton. It is found in the cell projection. Its subcellular location is the ruffle. The protein resides in the lamellipodium. The protein localises to the cytosol. It participates in protein modification; protein ubiquitination. Functionally, substrate-specific adapter of a BCR (BTB-CUL3-RBX1) E3 ubiquitin ligase complex that mediates the ubiquitination of target proteins, such as NPTXR, WNK1, WNK3 and WNK4, leading most often to their proteasomal degradation. The BCR(KLHL2) complex catalyzes ubiquitination and degradation of NPTXR. Responsible for degradative ubiquitination of the WNK kinases WNK1, WNK3 and WNK4. Plays a role in the reorganization of the actin cytoskeleton. Promotes growth of cell projections in oligodendrocyte precursors. This Rattus norvegicus (Rat) protein is Kelch-like protein 2.